A 341-amino-acid polypeptide reads, in one-letter code: Phosphoribosylformylglycinamidine cyclo-ligase (341 aa).

The protein belongs to the AIR synthase family.

It is found in the cytoplasm. The enzyme catalyses 2-formamido-N(1)-(5-O-phospho-beta-D-ribosyl)acetamidine + ATP = 5-amino-1-(5-phospho-beta-D-ribosyl)imidazole + ADP + phosphate + H(+). The protein operates within purine metabolism; IMP biosynthesis via de novo pathway; 5-amino-1-(5-phospho-D-ribosyl)imidazole from N(2)-formyl-N(1)-(5-phospho-D-ribosyl)glycinamide: step 2/2. This is Phosphoribosylformylglycinamidine cyclo-ligase from Xanthomonas campestris pv. campestris (strain B100).